Here is a 130-residue protein sequence, read N- to C-terminus: Large ribosomal subunit protein bL20c (130 aa).

This sequence belongs to the bacterial ribosomal protein bL20 family.

The protein resides in the plastid. Its subcellular location is the chloroplast. Binds directly to 23S ribosomal RNA and is necessary for the in vitro assembly process of the 50S ribosomal subunit. It is not involved in the protein synthesizing functions of that subunit. This Fagopyrum esculentum subsp. ancestrale (Wild buckwheat) protein is Large ribosomal subunit protein bL20c.